Reading from the N-terminus, the 264-residue chain is Thymidylate synthase (264 aa).

Residue Arg21 participates in dUMP binding. A (6R)-5,10-methylene-5,6,7,8-tetrahydrofolate-binding site is contributed by His51. 126–127 (RR) contributes to the dUMP binding site. Catalysis depends on Cys146, which acts as the Nucleophile. Residues 166 to 169 (RSAD), Asn177, and 207 to 209 (HIY) each bind dUMP. Asp169 contacts (6R)-5,10-methylene-5,6,7,8-tetrahydrofolate. Ala263 is a (6R)-5,10-methylene-5,6,7,8-tetrahydrofolate binding site.

This sequence belongs to the thymidylate synthase family. Bacterial-type ThyA subfamily. As to quaternary structure, homodimer.

The protein localises to the cytoplasm. The enzyme catalyses dUMP + (6R)-5,10-methylene-5,6,7,8-tetrahydrofolate = 7,8-dihydrofolate + dTMP. It functions in the pathway pyrimidine metabolism; dTTP biosynthesis. In terms of biological role, catalyzes the reductive methylation of 2'-deoxyuridine-5'-monophosphate (dUMP) to 2'-deoxythymidine-5'-monophosphate (dTMP) while utilizing 5,10-methylenetetrahydrofolate (mTHF) as the methyl donor and reductant in the reaction, yielding dihydrofolate (DHF) as a by-product. This enzymatic reaction provides an intracellular de novo source of dTMP, an essential precursor for DNA biosynthesis. The polypeptide is Thymidylate synthase (Ruminiclostridium cellulolyticum (strain ATCC 35319 / DSM 5812 / JCM 6584 / H10) (Clostridium cellulolyticum)).